The chain runs to 1276 residues: Histone-lysine N-methyltransferase PRDM16 (1276 aa).

Over residues 1–10 the composition is skewed to basic residues; it reads MRSKARARKL. Residues 1 to 68 form a disordered region; sequence MRSKARARKL…DFTPKEGSPY (68 aa). The 130-residue stretch at 82-211 folds into the SET domain; that stretch reads ADFELRESSI…PGEELLVHVK (130 aa). The segment at 230-253 adopts a C2H2-type 1; atypical zinc-finger fold; it reads FRCDECDELFQSKLDLRRHKKYTC. 5 consecutive C2H2-type zinc fingers follow at residues 281 to 303, 309 to 331, 337 to 360, 366 to 388, and 394 to 416; these read HECK…MVIH, YKCD…QMSH, FECE…RSQH, HACP…KHIH, and FICE…KRMH. The segment at 423–445 adopts a C2H2-type 7; atypical zinc-finger fold; it reads IKCKDCGQMFSTTSSLNKHRRFC. Disordered stretches follow at residues 533–657 and 772–804; these read SLLK…APPG and PFDL…QPLD. The segment covering 561 to 570 has biased composition (polar residues); the sequence is AVSNSSQGTT. Positions 575–597 are enriched in basic and acidic residues; sequence PEEKFESRLEDSCVEKLKTRSSD. A compositionally biased stretch (low complexity) spans 609–624; that stretch reads TTTGTDLDTTTGTGSD. The segment covering 632–642 has biased composition (basic and acidic residues); that stretch reads DPDKDKGKGKS. Positions 679 to 1038 are interaction with CTBP1, CTBP2 and ZNF516; sequence DEQLLTATGA…KHEHENAPVS (360 aa). The segment at 739-1276 is mediates interaction with SKI and regulation of TGF-beta signaling; the sequence is PFTDRALAHN…SGAFHPINHL (538 aa). 3 consecutive C2H2-type zinc fingers follow at residues 951–973, 979–1002, and 1008–1032; these read YTCR…LRTH, YRCK…RNIH, and FKCH…KHEH. 2 disordered regions span residues 1033-1065 and 1105-1163; these read ENAP…HALL and AQCP…EPAA. The span at 1047–1058 shows a compositional bias: polar residues; that stretch reads HLGTSASSPTSE. Over residues 1116-1133 the composition is skewed to acidic residues; that stretch reads EDVEEEDDDDLEEDDEDS.

The protein belongs to the PRDM16 family. Interacts with CEBPA, CEBPB and CEBPD; the interaction is direct. Interacts with PPARG and PPARA; controls brown adipocytes differentiation. Interacts with CTBP1 and CTBP2; represses the expression of WAT-specific genes. Interacts with PPARGC1A and PPARGC1B; interaction with PPARGC1A or PPARGC1B activates the transcription of BAT-specific gene. Interacts with HDAC1, SKI, SMAD2 and SMAD3; the interaction with SKI promotes the recruitment of SMAD3-HDAC1 complex on the promoter of TGF-beta target genes. Interacts with ZNF516; the interaction is direct and may play a role in the transcription of brown adipose tissue-specific gene. In terms of tissue distribution, expressed in uterus and kidney. Expressed in both cardiomyocytes and interstitial cells.

The protein resides in the nucleus. Its subcellular location is the cytoplasm. It carries out the reaction L-lysyl(9)-[histone H3] + S-adenosyl-L-methionine = N(6)-methyl-L-lysyl(9)-[histone H3] + S-adenosyl-L-homocysteine + H(+). Its function is as follows. Binds DNA and functions as a transcriptional regulator. Displays histone methyltransferase activity and monomethylates 'Lys-9' of histone H3 (H3K9me1) in vitro. Probably catalyzes the monomethylation of free histone H3 in the cytoplasm which is then transported to the nucleus and incorporated into nucleosomes where SUV39H methyltransferases use it as a substrate to catalyze histone H3 'Lys-9' trimethylation. Likely to be one of the primary histone methyltransferases along with MECOM/PRDM3 that direct cytoplasmic H3K9me1 methylation. Functions in the differentiation of brown adipose tissue (BAT) which is specialized in dissipating chemical energy in the form of heat in response to cold or excess feeding while white adipose tissue (WAT) is specialized in the storage of excess energy and the control of systemic metabolism. Together with CEBPB, regulates the differentiation of myoblastic precursors into brown adipose cells. Functions as a repressor of TGF-beta signaling. Functionally, binds DNA and functions as a transcriptional regulator. Functions as a repressor of TGF-beta signaling. May regulate granulocyte differentiation. The polypeptide is Histone-lysine N-methyltransferase PRDM16 (Homo sapiens (Human)).